The primary structure comprises 61 residues: MFIVFLLVVLATTVGSFTLDRVLEGRNAAAIDNALDQRDPKRQTPGCCWNPACVKNRCGRR.

Residues 1-16 (MFIVFLLVVLATTVGS) form the signal peptide. Residues 17-40 (FTLDRVLEGRNAAAIDNALDQRDP) constitute a propeptide that is removed on maturation. Residue Q43 is modified to Pyrrolidone carboxylic acid. P45 carries the post-translational modification Hydroxyproline. Cystine bridges form between C47–C53 and C48–C58. Cysteine amide is present on C58.

Belongs to the conotoxin A superfamily. As to expression, expressed by the venom duct.

The protein localises to the secreted. Its function is as follows. Alpha-conotoxins bind to the nicotinic acetylcholine receptors (nAChR) and inhibit them. This peptide potently blocks muscular nicotinic acetylcholine receptor (CHRNA1-CHRNB1-CHRNG-CHRND), and has no effect on neuronal receptors. It is able to totally displace [125I]-Bgtx from the Torpedo receptor with a complete inhibition in the high micromolar range. It produces a biphasic inhibition curve which fits nicely with a two-site model (Ki of 0.46 and 105 nM). The sequence is that of Alpha-conotoxin EIIA from Conus ermineus (Agate cone).